Consider the following 273-residue polypeptide: Undecaprenyl-diphosphatase (273 aa).

7 helical membrane passes run 13 to 35 (GLVEGFTEFLPISSTGHLIVFGN), 45 to 62 (VFEIAIQLGAVLAVVFEY), 82 to 102 (FVLNLAIAFIPAAVMGLLFDK), 108 to 128 (LFNPLSVAVMLVLGGFFILWV), 186 to 206 (TEFSFFLAVPMMVAATAYDVL), 219 to 239 (LILIGFIAAFVSGLVAVKALL), and 250 to 270 (FAYYRIVFGIVIIILWLSGWI).

This sequence belongs to the UppP family.

It is found in the cell inner membrane. The catalysed reaction is di-trans,octa-cis-undecaprenyl diphosphate + H2O = di-trans,octa-cis-undecaprenyl phosphate + phosphate + H(+). Its function is as follows. Catalyzes the dephosphorylation of undecaprenyl diphosphate (UPP). Confers resistance to bacitracin. This is Undecaprenyl-diphosphatase from Neisseria gonorrhoeae (strain NCCP11945).